The following is a 641-amino-acid chain: DNA primase (641 aa).

A CHC2-type zinc finger spans residues 41-65 (CPFHDEKSPSFQVSPSKGFFHCFGC). Residues 262-346 (SRAVVVEGYT…AAETYIAIAP (85 aa)) enclose the Toprim domain. Mg(2+) contacts are provided by Glu268, Asp317, and Asp319. The tract at residues 444 to 478 (RDRGGKGPAPDQRQRGGGPQQQAGPMTATPRGPAL) is disordered.

It belongs to the DnaG primase family. As to quaternary structure, monomer. Interacts with DnaB. Zn(2+) is required as a cofactor. The cofactor is Mg(2+).

The enzyme catalyses ssDNA + n NTP = ssDNA/pppN(pN)n-1 hybrid + (n-1) diphosphate.. Functionally, RNA polymerase that catalyzes the synthesis of short RNA molecules used as primers for DNA polymerase during DNA replication. The polypeptide is DNA primase (Streptomyces coelicolor (strain ATCC BAA-471 / A3(2) / M145)).